A 680-amino-acid polypeptide reads, in one-letter code: Anosmin-1 (680 aa).

An N-terminal signal peptide occupies residues 1-24 (MVPGVPGAVLTLCLWLAASSGCLA). Intrachain disulfides connect Cys-49/Cys-83, Cys-53/Cys-77, Cys-86/Cys-105, Cys-90/Cys-101, and Cys-116/Cys-120. A glycan (N-linked (GlcNAc...) asparagine) is linked at Asn-71. Residues 127–176 (LLVKQGDCPAPEKASGFAAACVESCEVDNECSGVKKCCSNGCGHTCQVPK) enclose the WAP domain. Fibronectin type-III domains follow at residues 186-287 (PRKE…SKDP), 292-400 (APAN…THAT), 425-523 (PTRP…TPPC), and 550-658 (KPEN…LPPS). N-linked (GlcNAc...) asparagine glycosylation is found at Asn-209, Asn-300, Asn-470, Asn-553, and Asn-564. The disordered stretch occupies residues 642 to 680 (EGPATIKTFRTPELPPSSAHRSHLKHRHPHHYKPSPERY). Basic residues predominate over residues 661 to 674 (HRSHLKHRHPHHYK).

In terms of assembly, interacts with FGFR1; this interaction does not interfere with FGF2-binding to FGFR1. Binds heparin. Heparin may promote or interfere with ANOS1-FGFR1-FGF2 complex formation depending on the sequential order of its binding to the various constituents. For instance, heparin-ANOS1 interaction favors subsequent binding to pre-existing binary FGFR1-FGF2 complex, while heparin-FGF2 complex does not interact with ANOS1-FGFR1. In terms of processing, N-glycosylated. Post-translationally, may be proteolytically cleaved at the cell surface and released from the cell surface. In terms of tissue distribution, expressed in the cerebellum (at protein level).

The protein localises to the cell membrane. It is found in the secreted. Functionally, has a dual branch-promoting and guidance activity, which may play an important role in the patterning of mitral and tufted cell collaterals to the olfactory cortex. Chemoattractant for fetal olfactory epithelial cells. This chain is Anosmin-1, found in Homo sapiens (Human).